Reading from the N-terminus, the 212-residue chain is Phosphatidylserine decarboxylase proenzyme (212 aa).

S182 (schiff-base intermediate with substrate; via pyruvic acid) is an active-site residue. Residue S182 is modified to Pyruvic acid (Ser); by autocatalysis.

This sequence belongs to the phosphatidylserine decarboxylase family. PSD-A subfamily. In terms of assembly, heterodimer of a large membrane-associated beta subunit and a small pyruvoyl-containing alpha subunit. The cofactor is pyruvate. In terms of processing, is synthesized initially as an inactive proenzyme. Formation of the active enzyme involves a self-maturation process in which the active site pyruvoyl group is generated from an internal serine residue via an autocatalytic post-translational modification. Two non-identical subunits are generated from the proenzyme in this reaction, and the pyruvate is formed at the N-terminus of the alpha chain, which is derived from the carboxyl end of the proenzyme. The post-translation cleavage follows an unusual pathway, termed non-hydrolytic serinolysis, in which the side chain hydroxyl group of the serine supplies its oxygen atom to form the C-terminus of the beta chain, while the remainder of the serine residue undergoes an oxidative deamination to produce ammonia and the pyruvoyl prosthetic group on the alpha chain.

Its subcellular location is the cell membrane. It catalyses the reaction a 1,2-diacyl-sn-glycero-3-phospho-L-serine + H(+) = a 1,2-diacyl-sn-glycero-3-phosphoethanolamine + CO2. It participates in phospholipid metabolism; phosphatidylethanolamine biosynthesis; phosphatidylethanolamine from CDP-diacylglycerol: step 2/2. Its function is as follows. Catalyzes the formation of phosphatidylethanolamine (PtdEtn) from phosphatidylserine (PtdSer). The protein is Phosphatidylserine decarboxylase proenzyme of Chlorobium limicola (strain DSM 245 / NBRC 103803 / 6330).